A 154-amino-acid polypeptide reads, in one-letter code: Probable ubiquitin-conjugating enzyme E2 31 (154 aa).

The region spanning 8-153 (KAAQRIAMEY…AREFTARHAN (146 aa)) is the UBC core domain. The active-site Glycyl thioester intermediate is the C91.

Belongs to the ubiquitin-conjugating enzyme family.

It carries out the reaction S-ubiquitinyl-[E1 ubiquitin-activating enzyme]-L-cysteine + [E2 ubiquitin-conjugating enzyme]-L-cysteine = [E1 ubiquitin-activating enzyme]-L-cysteine + S-ubiquitinyl-[E2 ubiquitin-conjugating enzyme]-L-cysteine.. The protein operates within protein modification; protein ubiquitination. Accepts the ubiquitin from the E1 complex and catalyzes its covalent attachment to other proteins. The chain is Probable ubiquitin-conjugating enzyme E2 31 (UBC31) from Arabidopsis thaliana (Mouse-ear cress).